The chain runs to 1474 residues: Alpha-2-macroglobulin-P (1474 aa).

The signal sequence occupies residues 1–32; the sequence is MGKRWLPSLALLPLPPPLLLLLLLLLPTNASA. Cysteine 55 and cysteine 93 are disulfide-bonded. 3 N-linked (GlcNAc...) asparagine glycosylation sites follow: asparagine 62, asparagine 77, and asparagine 253. Disulfide bonds link cysteine 257–cysteine 305 and cysteine 275–cysteine 293. The N-linked (GlcNAc...) asparagine glycan is linked to asparagine 402. 3 disulfides stabilise this stretch: cysteine 476–cysteine 569, cysteine 601–cysteine 771, and cysteine 650–cysteine 697. Positions 623–752 are bait region; that stretch reads LVYDLLPVKD…LVIVDSTGVA (130 aa). Residues asparagine 654 and asparagine 774 are each glycosylated (N-linked (GlcNAc...) asparagine). Cystine bridges form between cysteine 821–cysteine 849, cysteine 847–cysteine 883, cysteine 921–cysteine 1321, cysteine 1079–cysteine 1127, and cysteine 1352–cysteine 1467. A glycan (N-linked (GlcNAc...) asparagine) is linked at asparagine 869. Residues 972 to 975 constitute a cross-link (isoglutamyl cysteine thioester (Cys-Gln)); that stretch reads CGEQ. N-linked (GlcNAc...) asparagine glycosylation occurs at asparagine 991. N-linked (GlcNAc...) asparagine glycosylation is present at asparagine 1366.

This sequence belongs to the protease inhibitor I39 (alpha-2-macroglobulin) family. Homotetramer; disulfide-linked. Expressed in uterus, mesometrial lymphoid aggregate and mammary tissue during pregnancy. Expressed in ovary, testis and kidney. Low level expression in heart. Not expressed in liver.

The protein resides in the secreted. Functionally, is able to inhibit all four classes of proteinases by a unique 'trapping' mechanism. This protein has a peptide stretch, called the 'bait region' which contains specific cleavage sites for different proteinases. When a proteinase cleaves the bait region, a conformational change is induced in the protein which traps the proteinase. The entrapped enzyme remains active against low molecular weight substrates (activity against high molecular weight substrates is greatly reduced). Following cleavage in the bait region a thioester bond is hydrolyzed and mediates the covalent binding of the protein to the proteinase. In Mus musculus (Mouse), this protein is Alpha-2-macroglobulin-P.